The following is a 763-amino-acid chain: Thiamine biosynthesis multifunctional protein ThiED (763 aa).

The interval 1-210 (MTDFSLYLVT…ANPAAAATRL (210 aa)) is thiamine-phosphate synthase. 4-amino-2-methyl-5-(diphosphooxymethyl)pyrimidine-binding positions include 37–41 (QLRDK) and asparagine 69. 2 residues coordinate Mg(2+): aspartate 70 and aspartate 88. Position 107 (serine 107) interacts with 4-amino-2-methyl-5-(diphosphooxymethyl)pyrimidine. 140–142 (TAT) provides a ligand contact to 2-[(2R,5Z)-2-carboxy-4-methylthiazol-5(2H)-ylidene]ethyl phosphate. 4-amino-2-methyl-5-(diphosphooxymethyl)pyrimidine is bound at residue lysine 143. 2-[(2R,5Z)-2-carboxy-4-methylthiazol-5(2H)-ylidene]ethyl phosphate contacts are provided by residues glycine 174 and 194-195 (VS). Residues 245–500 (LSIAGTDPTG…GTGNGPVDHG (256 aa)) are hydroxymethylpyrimidine/phosphomethylpyrimidine kinase. Residue glutamine 282 coordinates 4-amino-5-hydroxymethyl-2-methylpyrimidine. The interval 550–763 (FTRALWEASG…RHGWTMVGSS (214 aa)) is thiaminase-2.

The protein in the N-terminal section; belongs to the thiamine-phosphate synthase family. This sequence in the central section; belongs to the ThiD family. It in the C-terminal section; belongs to the thiaminase-2 family. Mg(2+) serves as cofactor.

The catalysed reaction is 2-[(2R,5Z)-2-carboxy-4-methylthiazol-5(2H)-ylidene]ethyl phosphate + 4-amino-2-methyl-5-(diphosphooxymethyl)pyrimidine + 2 H(+) = thiamine phosphate + CO2 + diphosphate. The enzyme catalyses 2-(2-carboxy-4-methylthiazol-5-yl)ethyl phosphate + 4-amino-2-methyl-5-(diphosphooxymethyl)pyrimidine + 2 H(+) = thiamine phosphate + CO2 + diphosphate. It carries out the reaction 4-methyl-5-(2-phosphooxyethyl)-thiazole + 4-amino-2-methyl-5-(diphosphooxymethyl)pyrimidine + H(+) = thiamine phosphate + diphosphate. It catalyses the reaction 4-amino-5-hydroxymethyl-2-methylpyrimidine + ATP = 4-amino-2-methyl-5-(phosphooxymethyl)pyrimidine + ADP + H(+). The catalysed reaction is 4-amino-2-methyl-5-(phosphooxymethyl)pyrimidine + ATP = 4-amino-2-methyl-5-(diphosphooxymethyl)pyrimidine + ADP. Its pathway is cofactor biosynthesis; thiamine diphosphate biosynthesis; 4-amino-2-methyl-5-diphosphomethylpyrimidine from 5-amino-1-(5-phospho-D-ribosyl)imidazole: step 3/3. The protein operates within cofactor biosynthesis; thiamine diphosphate biosynthesis; thiamine phosphate from 4-amino-2-methyl-5-diphosphomethylpyrimidine and 4-methyl-5-(2-phosphoethyl)-thiazole: step 1/1. Condenses 4-methyl-5-(beta-hydroxyethyl)thiazole monophosphate (THZ-P) and 2-methyl-4-amino-5-hydroxymethyl pyrimidine pyrophosphate (HMP-PP) to form thiamine monophosphate (TMP). In terms of biological role, catalyzes the phosphorylation of hydroxymethylpyrimidine phosphate (HMP-P) to HMP-PP, and of HMP to HMP-P. In Corynebacterium glutamicum (strain ATCC 13032 / DSM 20300 / JCM 1318 / BCRC 11384 / CCUG 27702 / LMG 3730 / NBRC 12168 / NCIMB 10025 / NRRL B-2784 / 534), this protein is Thiamine biosynthesis multifunctional protein ThiED (theD).